Reading from the N-terminus, the 194-residue chain is Large ribosomal subunit protein uL22 (194 aa).

Belongs to the universal ribosomal protein uL22 family.

The sequence is that of Large ribosomal subunit protein uL22 (rpl17) from Aspergillus fumigatus (strain ATCC MYA-4609 / CBS 101355 / FGSC A1100 / Af293) (Neosartorya fumigata).